A 390-amino-acid polypeptide reads, in one-letter code: GTPase Obg (390 aa).

One can recognise an Obg domain in the interval 1 to 159; that stretch reads MKFVDEASIL…RELLLELMLL (159 aa). The tract at residues 127–147 is disordered; the sequence is NTRFKSSVNRTPRQKTNGTPG. A compositionally biased stretch (polar residues) spans 129–145; the sequence is RFKSSVNRTPRQKTNGT. The region spanning 160 to 333 is the OBG-type G domain; that stretch reads ADVGMLGMPN…LCWDVMTFII (174 aa). GTP contacts are provided by residues 166-173, 191-195, 213-216, 283-286, and 314-316; these read GMPNAGKS, FTTLV, DIPG, NKID, and SAA. Residues serine 173 and threonine 193 each contribute to the Mg(2+) site.

The protein belongs to the TRAFAC class OBG-HflX-like GTPase superfamily. OBG GTPase family. In terms of assembly, monomer. Mg(2+) is required as a cofactor.

The protein localises to the cytoplasm. Functionally, an essential GTPase which binds GTP, GDP and possibly (p)ppGpp with moderate affinity, with high nucleotide exchange rates and a fairly low GTP hydrolysis rate. Plays a role in control of the cell cycle, stress response, ribosome biogenesis and in those bacteria that undergo differentiation, in morphogenesis control. This chain is GTPase Obg, found in Shigella dysenteriae serotype 1 (strain Sd197).